A 192-amino-acid chain; its full sequence is Transcription termination/antitermination protein NusG (192 aa).

In terms of domain architecture, KOW spans 140–168; that stretch reads VGEIVTVTDGPFETFMGTVEEIDQEKNRL.

This sequence belongs to the NusG family.

In terms of biological role, participates in transcription elongation, termination and antitermination. In Rickettsia conorii (strain ATCC VR-613 / Malish 7), this protein is Transcription termination/antitermination protein NusG.